We begin with the raw amino-acid sequence, 210 residues long: High-affinity nitrate transporter 3.1 (210 aa).

The N-terminal stretch at 1-22 is a signal peptide; sequence MAIQKILFASLLICSLIQSIHG. Residues 178 to 198 traverse the membrane as a helical segment; the sequence is LDIASICFSVFSVVALVVFFV.

The protein belongs to the NAR2 family. As to quaternary structure, heterotetramer composed of two NRT2.1 and two NRT3.1. Interacts with NRT2.1 and NRT2.3. Interacts with all other NRT2 transporters, including NRT2.5. Highly expressed in roots. Detected in shoots.

It localises to the cell membrane. Its function is as follows. Acts as a dual component transporter with NTR2.1. Required for high-affinity nitrate transport. Acts as a repressor of lateral root initiation. May be involved in targeting NRT2 proteins to the plasma membrane. The sequence is that of High-affinity nitrate transporter 3.1 (NRT3.1) from Arabidopsis thaliana (Mouse-ear cress).